Reading from the N-terminus, the 232-residue chain is Ubiquinone biosynthesis O-methyltransferase (232 aa).

S-adenosyl-L-methionine is bound by residues Arg36, Gly55, Asp76, and Leu120.

This sequence belongs to the methyltransferase superfamily. UbiG/COQ3 family.

It catalyses the reaction a 3-demethylubiquinol + S-adenosyl-L-methionine = a ubiquinol + S-adenosyl-L-homocysteine + H(+). The enzyme catalyses a 3-(all-trans-polyprenyl)benzene-1,2-diol + S-adenosyl-L-methionine = a 2-methoxy-6-(all-trans-polyprenyl)phenol + S-adenosyl-L-homocysteine + H(+). It participates in cofactor biosynthesis; ubiquinone biosynthesis. In terms of biological role, O-methyltransferase that catalyzes the 2 O-methylation steps in the ubiquinone biosynthetic pathway. This chain is Ubiquinone biosynthesis O-methyltransferase, found in Pseudomonas putida (strain W619).